Reading from the N-terminus, the 278-residue chain is Large ribosomal subunit protein uL2 (278 aa).

Disordered regions lie at residues 33 to 57 (LIRPLHGTGGRNAHGRITTRHKGGG) and 224 to 278 (VVMN…GKKR). The span at 45-57 (AHGRITTRHKGGG) shows a compositional bias: basic residues. Basic and acidic residues predominate over residues 253–268 (PEGRTRKPNKASDKLI). The span at 269 to 278 (VRRRRTGKKR) shows a compositional bias: basic residues.

This sequence belongs to the universal ribosomal protein uL2 family. As to quaternary structure, part of the 50S ribosomal subunit. Forms a bridge to the 30S subunit in the 70S ribosome.

One of the primary rRNA binding proteins. Required for association of the 30S and 50S subunits to form the 70S ribosome, for tRNA binding and peptide bond formation. It has been suggested to have peptidyltransferase activity; this is somewhat controversial. Makes several contacts with the 16S rRNA in the 70S ribosome. This Mycobacteroides abscessus (strain ATCC 19977 / DSM 44196 / CCUG 20993 / CIP 104536 / JCM 13569 / NCTC 13031 / TMC 1543 / L948) (Mycobacterium abscessus) protein is Large ribosomal subunit protein uL2.